Reading from the N-terminus, the 268-residue chain is MDNMLLAFLLTLFAGLATGVGSLIAFMAKTTNTKFLSFALGLSAGVMIYVSMVDIFFKAKDALTAYLGDTQGYWLTVIAFFGGMLLIGFIDRFIPKYTNPHEVKKVEDMKKPHQPLRDPDLMKMGLFTALALAIHNFPEGIATFVSTLHDPSIGLAIAIAVAIHNIPEGIAVSVPIYYATGDRKKAFKYSFLSGLAEPLGAIVAILILMPFLNDLMFGIIFAMVAGIMVFISLDELLPAARKYDEAHMSMYGVISGMALMAVSLLLLA.

A run of 5 helical transmembrane segments spans residues 6–26, 37–57, 70–90, 125–145, and 152–172; these read LAFLLTLFAGLATGVGSLIAF, SFALGLSAGVMIYVSMVDIFF, TQGYWLTVIAFFGGMLLIGFI, GLFTALALAIHNFPEGIATFV, and SIGLAIAIAVAIHNIPEGIAV. Positions 136 and 139 each coordinate Fe(2+). The Zn(2+) site is built by Glu-139 and His-164. Residues Asn-165, Glu-168, and Glu-197 each coordinate Fe(2+). Glu-168 is a binding site for Zn(2+). 2 helical membrane passes run 201-221 and 248-268; these read AIVAILILMPFLNDLMFGIIF and MSMYGVISGMALMAVSLLLLA.

Belongs to the ZIP transporter (TC 2.A.5) family. ZupT subfamily.

The protein resides in the cell membrane. It catalyses the reaction Zn(2+)(in) = Zn(2+)(out). Mediates zinc uptake. May also transport other divalent cations. The sequence is that of Zinc transporter ZupT from Oceanobacillus iheyensis (strain DSM 14371 / CIP 107618 / JCM 11309 / KCTC 3954 / HTE831).